A 927-amino-acid chain; its full sequence is GPI inositol-deacylase (927 aa).

Over 1-4 (MNPL) the chain is Cytoplasmic. The helical transmembrane segment at 5 to 25 (SAVFNSVVLVLLALGVTDVFF) threads the bilayer. Over 26 to 595 (SYESSRCSMT…QIVRFHGIYL (570 aa)) the chain is Lumenal. Asn75 and Asn155 each carry an N-linked (GlcNAc...) asparagine glycan. Ser169 is a catalytic residue. N-linked (GlcNAc...) asparagine glycosylation is found at Asn230, Asn362, Asn397, Asn432, Asn444, and Asn482. Residues 596–616 (PVYIVANLLLAYGAQLHSILI) traverse the membrane as a helical segment. The Cytoplasmic segment spans residues 617–672 (QGSCMDLDLSFDVAAKPYKVDPVLIICKYLLNYKWFKNYWDGLMLPQLDAVQLHAY). Residues 673–693 (GFWFPLASLFFFIFGTSIAYW) traverse the membrane as a helical segment. Topologically, residues 694–733 (SSIGLQAAVRILSSLWIYLKRPSMFPKESKCITYRVYAET) are lumenal. Residues 734–754 (LFFAFISWRSCGTFSLLLVFL) form a helical membrane-spanning segment. The Cytoplasmic portion of the chain corresponds to 755 to 821 (RYLSKVLILY…KALDDCLKMH (67 aa)). The helical transmembrane segment at 822-842 (FTILHLNLWIVLLGLPSFIYW) threads the bilayer. Residues 843–858 (LKTLRYTIQLDPDPNR) lie on the Lumenal side of the membrane. The helical transmembrane segment at 859-879 (VSALVLIFILEILMNSTTSAI) threads the bilayer. Residues 880 to 887 (KSSVCLKT) are Cytoplasmic-facing. The helical transmembrane segment at 888–908 (AAVLQLPLSIIVVAFGTLHLY) threads the bilayer. Topologically, residues 909-927 (RISNLIAFSLFLHVVCCFV) are lumenal.

The protein belongs to the GPI inositol-deacylase family.

It is found in the endoplasmic reticulum membrane. Functionally, GPI inositol-deacylase that catalyzes the remove of the acyl chain linked to the 2-OH position of inositol ring from the GPI-anchored protein (GPI-AP) in the endoplasmic reticulum. Initiates the post-attachment remodeling phase of GPI-AP biogenesis and participates in endoplasmic reticulum (ER)-to-Golgi transport of GPI-anchored protein. This chain is GPI inositol-deacylase, found in Xenopus laevis (African clawed frog).